The sequence spans 196 residues: FMN-dependent NADH:quinone oxidoreductase (196 aa).

Serine 10 serves as a coordination point for FMN.

It belongs to the azoreductase type 1 family. Homodimer. It depends on FMN as a cofactor.

The catalysed reaction is 2 a quinone + NADH + H(+) = 2 a 1,4-benzosemiquinone + NAD(+). The enzyme catalyses N,N-dimethyl-1,4-phenylenediamine + anthranilate + 2 NAD(+) = 2-(4-dimethylaminophenyl)diazenylbenzoate + 2 NADH + 2 H(+). In terms of biological role, quinone reductase that provides resistance to thiol-specific stress caused by electrophilic quinones. Also exhibits azoreductase activity. Catalyzes the reductive cleavage of the azo bond in aromatic azo compounds to the corresponding amines. The sequence is that of FMN-dependent NADH:quinone oxidoreductase from Cereibacter sphaeroides (strain ATCC 17029 / ATH 2.4.9) (Rhodobacter sphaeroides).